Reading from the N-terminus, the 500-residue chain is L-arabinose isomerase (500 aa).

Residues E306, E333, H350, and H450 each coordinate Mn(2+).

Belongs to the arabinose isomerase family. As to quaternary structure, homohexamer. The cofactor is Mn(2+).

It catalyses the reaction beta-L-arabinopyranose = L-ribulose. It participates in carbohydrate degradation; L-arabinose degradation via L-ribulose; D-xylulose 5-phosphate from L-arabinose (bacterial route): step 1/3. Functionally, catalyzes the conversion of L-arabinose to L-ribulose. The chain is L-arabinose isomerase from Salmonella newport (strain SL254).